The following is a 1102-amino-acid chain: MTNLATTMLPDLIEIQHASFHWFLEEGLIEELNSFSPISDYTGKLELHFLGKDYKLKQPKYDVDESKRRDASYSVQMYVPTRLINKETGEIKEQEVFIGDLPLMTERGTFIINGAERVIVNQIVRSPGVYYKKELDKNGRRTYSASLIPNRGAWLKFETDKNGLVYVRIDKTRKLSAQVLLKAIGLSDNEILDSLSHPEFYQKTLDKEGNPTEEEALVELYKKLRPGEPPTVSGGQQLLESRFFDPKRYDLGRVGRYKLNKKLRLNEADTTRVLTPQDILAAINYLINLEFDVGTTDDIDHLGNRRVRSVGELLQNQIRVGLNRLERIIRERMTVSESDALTPASLVNPKPLVAAIKEFFGSSQLSQFMDQTNPLAELTHKRRISALGPGGLTRERAGFAVRDIHPSHHGRICPVETPEGPNAGLIGSLATCARVNDYGFIETPYFRVESGRVRKDLDPVYLTADEEDDMRVAPGDIPTDEEGNIIGESVPIRYRQEFSTTSPEQVDYVAVSPVQIISVATSMIPFLEHDDANRALMGSNMQRQAVPLLRPERPLVGTGLEAQAARDSGMVIVSRTHGIVTYVDATEIRVQPHSPDNPAEKGEEIVYPIQKYQRSNQDTCLNQRPLVYAGEDVVPGQVLADGSATEGGELALGQNILVAYMPWEGYNYEDAILISERLVYDDVYTSIHIEKFEIEARQTKLGPEEITREIPNVGEDALRNLDEHGIIRIGAWVESGDILVGKVTPKGEADQPPEEKLLRAIFGEKARDVRDNSLRVPNGEKGRVVDVRVFTREKGDELPPGANMVVRIYVAQKRKIQVGDKMAGRHGNKGIISRILPIEDMPYLPDGRPIDIALNPLGVPSRMNVGQVFECLLGWAGENLGVRFKITPFDEMYGEEASRDTVHGLLEEASQRPNKDWVFNENHPGKIQVFDGRTGEPFDRPITVGQAYMLKLVHLVDDKIHARSTGPYSLVTQQPLGGKAQQGGQRFGEMEVWALEAYGAAYILQELLTVKSDDMQGRNEALNAIVKGKSIPRPGTPESFKVLMRELQSLGLDIAAHKVQLSEDGESADAEVDLMIDSQRRAPNRPTYESLHTEEDLEEEEV.

Residues 1076-1102 (IDSQRRAPNRPTYESLHTEEDLEEEEV) are disordered.

Belongs to the RNA polymerase beta chain family. As to quaternary structure, in cyanobacteria the RNAP catalytic core is composed of 2 alpha, 1 beta, 1 beta', 1 gamma and 1 omega subunit. When a sigma factor is associated with the core the holoenzyme is formed, which can initiate transcription.

It carries out the reaction RNA(n) + a ribonucleoside 5'-triphosphate = RNA(n+1) + diphosphate. Its function is as follows. DNA-dependent RNA polymerase catalyzes the transcription of DNA into RNA using the four ribonucleoside triphosphates as substrates. In Synechocystis sp. (strain ATCC 27184 / PCC 6803 / Kazusa), this protein is DNA-directed RNA polymerase subunit beta.